The primary structure comprises 464 residues: tRNA(Ile2) 2-agmatinylcytidine synthetase TiaS (464 aa).

Belongs to the TiaS family.

It localises to the cytoplasm. The catalysed reaction is cytidine(34) in tRNA(Ile2) + agmatine + ATP + H2O = 2-agmatinylcytidine(34) in tRNA(Ile2) + AMP + 2 phosphate + 2 H(+). ATP-dependent agmatine transferase that catalyzes the formation of 2-agmatinylcytidine (agm2C) at the wobble position (C34) of tRNA(Ile2), converting the codon specificity from AUG to AUA. This Ignisphaera aggregans (strain DSM 17230 / JCM 13409 / AQ1.S1) protein is tRNA(Ile2) 2-agmatinylcytidine synthetase TiaS.